Reading from the N-terminus, the 356-residue chain is 3-isopropylmalate dehydrogenase (356 aa).

Substrate-binding residues include Arg-95, Arg-105, Arg-133, and Asp-223. Positions 223, 247, and 251 each coordinate Mg(2+). Residue 281-293 (GSAPDIAGQNKAN) participates in NAD(+) binding.

It belongs to the isocitrate and isopropylmalate dehydrogenases family. LeuB type 1 subfamily. Homodimer. Mg(2+) is required as a cofactor. The cofactor is Mn(2+).

The protein localises to the cytoplasm. The enzyme catalyses (2R,3S)-3-isopropylmalate + NAD(+) = 4-methyl-2-oxopentanoate + CO2 + NADH. The protein operates within amino-acid biosynthesis; L-leucine biosynthesis; L-leucine from 3-methyl-2-oxobutanoate: step 3/4. In terms of biological role, catalyzes the oxidation of 3-carboxy-2-hydroxy-4-methylpentanoate (3-isopropylmalate) to 3-carboxy-4-methyl-2-oxopentanoate. The product decarboxylates to 4-methyl-2 oxopentanoate. This chain is 3-isopropylmalate dehydrogenase, found in Neisseria meningitidis serogroup A / serotype 4A (strain DSM 15465 / Z2491).